A 273-amino-acid chain; its full sequence is MTLTKRVIPCIDVDLDDDGEPAVYTGVNFEELAYTGDPVEMAKRYNEAGADEFVFLDITASAEGRETMLDTVSAVADEVFIPLTVGGGIRDTDDIRETLRAGADKVSINSGAIADPSLVDRGAKAFGSQCIVISVDARRRFDEQGQHYTQVDGESCWFECTVHGGREGTGMDAIEWVQEAQRRGAGELFVNSIDADGTQDGYDVPLTAAVCDAVSTPVIASSGCGAPGDMADAYDAGADAALAASIFHFDEYSIAETKETLADAGYPIRAPDA.

Residues D12 and D136 contribute to the active site.

The protein belongs to the HisA/HisF family. In terms of assembly, heterodimer of HisH and HisF.

The protein resides in the cytoplasm. The enzyme catalyses 5-[(5-phospho-1-deoxy-D-ribulos-1-ylimino)methylamino]-1-(5-phospho-beta-D-ribosyl)imidazole-4-carboxamide + L-glutamine = D-erythro-1-(imidazol-4-yl)glycerol 3-phosphate + 5-amino-1-(5-phospho-beta-D-ribosyl)imidazole-4-carboxamide + L-glutamate + H(+). It participates in amino-acid biosynthesis; L-histidine biosynthesis; L-histidine from 5-phospho-alpha-D-ribose 1-diphosphate: step 5/9. Functionally, IGPS catalyzes the conversion of PRFAR and glutamine to IGP, AICAR and glutamate. The HisF subunit catalyzes the cyclization activity that produces IGP and AICAR from PRFAR using the ammonia provided by the HisH subunit. In Halobacterium salinarum (strain ATCC 29341 / DSM 671 / R1), this protein is Imidazole glycerol phosphate synthase subunit HisF.